A 1253-amino-acid polypeptide reads, in one-letter code: Methionine synthase (1253 aa).

The Hcy-binding domain maps to 6-326 (QDEIEAILRK…DHIREIAEAV (321 aa)). Cys248, Cys311, and Cys312 together coordinate Zn(2+). Residues 359–620 (FVNIGERCNV…IHKDLLQLCE (262 aa)) enclose the Pterin-binding domain. Residues 370–372 (GSK), Asp437, Asn458, Asp525, Asn567, Arg573, and Arg579 contribute to the (6S)-5,6,7,8-tetrahydrofolate site. A B12-binding N-terminal domain is found at 650-747 (QTDEWRNGSI…FMEKEREEAR (98 aa)). Residues Glu697, 770-774 (GDVHD), His773, Ser818, Thr822, and Ala874 each bind methylcob(III)alamin. One can recognise a B12-binding domain in the interval 760-895 (QGTIVLATVK…DENLKDDYFE (136 aa)). Residues 911-1253 (SLKERKYLPL…LGPILGYDTD (343 aa)) enclose the AdoMet activation domain. S-adenosyl-L-methionine-binding positions include Asp962, Arg1160, and 1215–1216 (YF). Residue Thr1252 is modified to Phosphothreonine.

It belongs to the vitamin-B12 dependent methionine synthase family. In terms of assembly, monomer. Dimer. Forms a multiprotein complex with MMACHC, MMADHC and MTRR. Requires methylcob(III)alamin as cofactor. Zn(2+) is required as a cofactor.

Its subcellular location is the cytoplasm. It catalyses the reaction (6S)-5-methyl-5,6,7,8-tetrahydrofolate + L-homocysteine = (6S)-5,6,7,8-tetrahydrofolate + L-methionine. The protein operates within amino-acid biosynthesis; L-methionine biosynthesis via de novo pathway; L-methionine from L-homocysteine (MetH route): step 1/1. In terms of biological role, catalyzes the transfer of a methyl group from methylcob(III)alamin (MeCbl) to homocysteine, yielding enzyme-bound cob(I)alamin and methionine in the cytosol. MeCbl is an active form of cobalamin (vitamin B12) used as a cofactor for methionine biosynthesis. Cob(I)alamin form is regenerated to MeCbl by a transfer of a methyl group from 5-methyltetrahydrofolate. The processing of cobalamin in the cytosol occurs in a multiprotein complex composed of at least MMACHC, MMADHC, MTRR (methionine synthase reductase) and MTR which may contribute to shuttle safely and efficiently cobalamin towards MTR in order to produce methionine. The polypeptide is Methionine synthase (Mtr) (Rattus norvegicus (Rat)).